Consider the following 585-residue polypeptide: Pyruvate kinase (585 aa).

Arg32 is a substrate binding site. K(+) is bound by residues Asn34, Ser36, Asp66, and Thr67. 34–37 (NFSH) contributes to the ATP binding site. ATP-binding residues include Arg73 and Lys156. Glu221 contributes to the Mg(2+) binding site. Gly244, Asp245, and Thr277 together coordinate substrate. Asp245 contributes to the Mg(2+) binding site.

This sequence belongs to the pyruvate kinase family. The protein in the C-terminal section; belongs to the PEP-utilizing enzyme family. It depends on Mg(2+) as a cofactor. K(+) is required as a cofactor.

It catalyses the reaction pyruvate + ATP = phosphoenolpyruvate + ADP + H(+). The protein operates within carbohydrate degradation; glycolysis; pyruvate from D-glyceraldehyde 3-phosphate: step 5/5. In Staphylococcus epidermidis (strain ATCC 35984 / DSM 28319 / BCRC 17069 / CCUG 31568 / BM 3577 / RP62A), this protein is Pyruvate kinase (pyk).